Here is a 232-residue protein sequence, read N- to C-terminus: Phosphatidylserine decarboxylase proenzyme (232 aa).

The active-site Schiff-base intermediate with substrate; via pyruvic acid is the Ser-190. Residue Ser-190 is modified to Pyruvic acid (Ser); by autocatalysis.

Belongs to the phosphatidylserine decarboxylase family. PSD-A subfamily. In terms of assembly, heterodimer of a large membrane-associated beta subunit and a small pyruvoyl-containing alpha subunit. It depends on pyruvate as a cofactor. Post-translationally, is synthesized initially as an inactive proenzyme. Formation of the active enzyme involves a self-maturation process in which the active site pyruvoyl group is generated from an internal serine residue via an autocatalytic post-translational modification. Two non-identical subunits are generated from the proenzyme in this reaction, and the pyruvate is formed at the N-terminus of the alpha chain, which is derived from the carboxyl end of the proenzyme. The post-translation cleavage follows an unusual pathway, termed non-hydrolytic serinolysis, in which the side chain hydroxyl group of the serine supplies its oxygen atom to form the C-terminus of the beta chain, while the remainder of the serine residue undergoes an oxidative deamination to produce ammonia and the pyruvoyl prosthetic group on the alpha chain.

The protein localises to the cell membrane. It carries out the reaction a 1,2-diacyl-sn-glycero-3-phospho-L-serine + H(+) = a 1,2-diacyl-sn-glycero-3-phosphoethanolamine + CO2. It functions in the pathway phospholipid metabolism; phosphatidylethanolamine biosynthesis; phosphatidylethanolamine from CDP-diacylglycerol: step 2/2. Functionally, catalyzes the formation of phosphatidylethanolamine (PtdEtn) from phosphatidylserine (PtdSer). The polypeptide is Phosphatidylserine decarboxylase proenzyme (Methylocella silvestris (strain DSM 15510 / CIP 108128 / LMG 27833 / NCIMB 13906 / BL2)).